The sequence spans 660 residues: Phosphatidylinositol-3-phosphate phosphatase MTMR7 (660 aa).

Positions 126–504 (GWVLIDLSEE…FMYKFWSGMY (379 aa)) constitute a Myotubularin phosphatase domain. Asparagine 250, asparagine 275, and isoleucine 276 together coordinate a 1,2-diacyl-sn-glycero-3-phospho-(1D-myo-inositol-3-phosphate). The Phosphocysteine intermediate role is filled by cysteine 338. Residues serine 339, aspartate 340, glycine 341, tryptophan 342, aspartate 343, arginine 344, and arginine 384 each contribute to the a 1,2-diacyl-sn-glycero-3-phospho-(1D-myo-inositol-3-phosphate) site. The stretch at 514 to 558 (RQSVTDYLMAVKEETQQLEEELEALEERLEKIQKVQLNCTKVKSK) forms a coiled coil. A disordered region spans residues 554–660 (KVKSKQSEPS…DSDEAVFLTA (107 aa)). Residues 566 to 596 (SGFSTSDNSIANTPQDYSGNMKSFPSRSPSQ) are compositionally biased toward polar residues. Threonine 578 bears the Phosphothreonine mark. Residues 641 to 653 (APSEDSGKDRDSD) are compositionally biased toward basic and acidic residues.

It belongs to the protein-tyrosine phosphatase family. Non-receptor class myotubularin subfamily. As to quaternary structure, heterodimer (via C-terminus) with MTMR9 (via coiled coil domain); the interaction enhances MTMR7 catalytic activity. Does not homodimerize. Interacts with RAB1B (in GDP-bound form).

It localises to the cytoplasm. It is found in the endomembrane system. The enzyme catalyses a 1,2-diacyl-sn-glycero-3-phospho-(1D-myo-inositol-3-phosphate) + H2O = a 1,2-diacyl-sn-glycero-3-phospho-(1D-myo-inositol) + phosphate. It carries out the reaction 1D-myo-inositol 1,3-bisphosphate + H2O = 1D-myo-inositol 1-phosphate + phosphate. With respect to regulation, interaction with MTMR9 increases phosphatase activity. Functionally, lipid phosphatase that specifically dephosphorylates the D-3 position of phosphatidylinositol 3-phosphate (PtdIns(3)P) and inositol 1,3-bisphosphate (Ins(1,3)P2). The polypeptide is Phosphatidylinositol-3-phosphate phosphatase MTMR7 (Pongo abelii (Sumatran orangutan)).